The primary structure comprises 999 residues: RING finger domain and kelch repeat-containing protein DDB_G0271372 (999 aa).

The RING-type zinc-finger motif lies at 7–49 (CPNCLKVFNNPRQLECDHILCTRCIEGVYNPGRTPIIKCPVCD). A compositionally biased stretch (low complexity) spans 92–143 (STGSSNNNNNNNNNNNNNNNNFVINNSNNKNNGATTTTTTTTTTTNSNSNST). 2 disordered regions span residues 92-147 (STGS…KSKV) and 159-209 (ASPK…SSPP). Over residues 165–196 (GSSQGSLTTINNQKKLTLSPQRASSTTTTSVN) the composition is skewed to polar residues. The B box-type zinc finger occupies 258-302 (AELSKCNDHDQKKFTIFCTDCDQLLCDECLNNNQQQHENHQLNKI). Zn(2+) contacts are provided by C263, H266, C286, and H294. Residues 355–402 (DIDTMIENLKERKNALISQIDKEYEEQKLELKDQIETINTTIVDIQNN) are a coiled coil. Low complexity-rich tracts occupy residues 485 to 516 (GVSSSPTGTGSNGTPQQQQQQSANGNPTIITT) and 526 to 536 (SPSPTSSSSST). The segment at 485-637 (GVSSSPTGTG…TSTNGSNTKI (153 aa)) is disordered. The segment covering 552-612 (LSSQNYDNFG…SHGSKLNDNI (61 aa)) has biased composition (polar residues). Positions 613–635 (NTNNNNSPSPTSSSTTSTNGSNT) are enriched in low complexity. 5 Kelch repeats span residues 655–700 (ITAR…YDNN), 702–745 (TIYR…VFDG), 748–793 (YIYL…YHPT), 796–842 (CIYV…FDGS), and 844–892 (YINI…SMNL). Low complexity predominate over residues 904–924 (NSFSSISSHSSLNSSSSNNGI). The interval 904 to 936 (NSFSSISSHSSLNSSSSNNGISGSGGSGGDNEI) is disordered.

This chain is RING finger domain and kelch repeat-containing protein DDB_G0271372, found in Dictyostelium discoideum (Social amoeba).